A 310-amino-acid chain; its full sequence is Aspartate carbamoyltransferase catalytic subunit (310 aa).

Positions 59 and 60 each coordinate carbamoyl phosphate. Lys-87 provides a ligand contact to L-aspartate. The carbamoyl phosphate site is built by Arg-109, His-137, and Gln-140. The L-aspartate site is built by Arg-170 and Arg-225. Gly-266 and Pro-267 together coordinate carbamoyl phosphate.

It belongs to the aspartate/ornithine carbamoyltransferase superfamily. ATCase family. As to quaternary structure, heterododecamer (2C3:3R2) of six catalytic PyrB chains organized as two trimers (C3), and six regulatory PyrI chains organized as three dimers (R2).

It catalyses the reaction carbamoyl phosphate + L-aspartate = N-carbamoyl-L-aspartate + phosphate + H(+). It participates in pyrimidine metabolism; UMP biosynthesis via de novo pathway; (S)-dihydroorotate from bicarbonate: step 2/3. Its function is as follows. Catalyzes the condensation of carbamoyl phosphate and aspartate to form carbamoyl aspartate and inorganic phosphate, the committed step in the de novo pyrimidine nucleotide biosynthesis pathway. The sequence is that of Aspartate carbamoyltransferase catalytic subunit from Pelobacter propionicus (strain DSM 2379 / NBRC 103807 / OttBd1).